Consider the following 637-residue polypeptide: Chaperone protein DnaK (637 aa).

A Phosphothreonine; by autocatalysis modification is found at Thr196. The tract at residues 598 to 637 (AEAPGADAPEGQAPQDGGSKKGGEGAVENAEYEVIDGDGK) is disordered. Positions 627–637 (AEYEVIDGDGK) are enriched in acidic residues.

Belongs to the heat shock protein 70 family.

In terms of biological role, acts as a chaperone. This is Chaperone protein DnaK from Chlorobium luteolum (strain DSM 273 / BCRC 81028 / 2530) (Pelodictyon luteolum).